The chain runs to 550 residues: Chaperonin GroEL (550 aa).

ATP is bound by residues 30–33 (TLGP), Lys51, 87–91 (DGTTT), Gly415, 481–483 (NAA), and Asp497.

Belongs to the chaperonin (HSP60) family. Forms a cylinder of 14 subunits composed of two heptameric rings stacked back-to-back. Interacts with the co-chaperonin GroES.

It localises to the cytoplasm. It carries out the reaction ATP + H2O + a folded polypeptide = ADP + phosphate + an unfolded polypeptide.. Its function is as follows. Together with its co-chaperonin GroES, plays an essential role in assisting protein folding. The GroEL-GroES system forms a nano-cage that allows encapsulation of the non-native substrate proteins and provides a physical environment optimized to promote and accelerate protein folding. In Photobacterium profundum (strain SS9), this protein is Chaperonin GroEL.